Consider the following 276-residue polypeptide: 4-hydroxy-3-methylbut-2-enyl diphosphate reductase (276 aa).

C12 is a binding site for [4Fe-4S] cluster. Positions 36 and 71 each coordinate (2E)-4-hydroxy-3-methylbut-2-enyl diphosphate. Dimethylallyl diphosphate-binding residues include H36 and H71. Residues H36 and H71 each coordinate isopentenyl diphosphate. Position 93 (C93) interacts with [4Fe-4S] cluster. H121 is a binding site for (2E)-4-hydroxy-3-methylbut-2-enyl diphosphate. Position 121 (H121) interacts with dimethylallyl diphosphate. H121 contributes to the isopentenyl diphosphate binding site. E123 acts as the Proton donor in catalysis. T160 is a binding site for (2E)-4-hydroxy-3-methylbut-2-enyl diphosphate. C188 provides a ligand contact to [4Fe-4S] cluster. Positions 216, 217, 218, and 259 each coordinate (2E)-4-hydroxy-3-methylbut-2-enyl diphosphate. 4 residues coordinate dimethylallyl diphosphate: S216, S217, N218, and S259. Isopentenyl diphosphate-binding residues include S216, S217, N218, and S259.

This sequence belongs to the IspH family. [4Fe-4S] cluster serves as cofactor.

It catalyses the reaction isopentenyl diphosphate + 2 oxidized [2Fe-2S]-[ferredoxin] + H2O = (2E)-4-hydroxy-3-methylbut-2-enyl diphosphate + 2 reduced [2Fe-2S]-[ferredoxin] + 2 H(+). The catalysed reaction is dimethylallyl diphosphate + 2 oxidized [2Fe-2S]-[ferredoxin] + H2O = (2E)-4-hydroxy-3-methylbut-2-enyl diphosphate + 2 reduced [2Fe-2S]-[ferredoxin] + 2 H(+). Its pathway is isoprenoid biosynthesis; dimethylallyl diphosphate biosynthesis; dimethylallyl diphosphate from (2E)-4-hydroxy-3-methylbutenyl diphosphate: step 1/1. The protein operates within isoprenoid biosynthesis; isopentenyl diphosphate biosynthesis via DXP pathway; isopentenyl diphosphate from 1-deoxy-D-xylulose 5-phosphate: step 6/6. Catalyzes the conversion of 1-hydroxy-2-methyl-2-(E)-butenyl 4-diphosphate (HMBPP) into a mixture of isopentenyl diphosphate (IPP) and dimethylallyl diphosphate (DMAPP). Acts in the terminal step of the DOXP/MEP pathway for isoprenoid precursor biosynthesis. This chain is 4-hydroxy-3-methylbut-2-enyl diphosphate reductase, found in Nautilia profundicola (strain ATCC BAA-1463 / DSM 18972 / AmH).